Here is a 376-residue protein sequence, read N- to C-terminus: Succinyl-diaminopimelate desuccinylase (376 aa).

A Zn(2+)-binding site is contributed by H66. D68 is a catalytic residue. Zn(2+) is bound at residue D99. E133 acts as the Proton acceptor in catalysis. Zn(2+)-binding residues include E134, E162, and H348.

Belongs to the peptidase M20A family. DapE subfamily. In terms of assembly, homodimer. The cofactor is Zn(2+). Requires Co(2+) as cofactor.

The catalysed reaction is N-succinyl-(2S,6S)-2,6-diaminopimelate + H2O = (2S,6S)-2,6-diaminopimelate + succinate. The protein operates within amino-acid biosynthesis; L-lysine biosynthesis via DAP pathway; LL-2,6-diaminopimelate from (S)-tetrahydrodipicolinate (succinylase route): step 3/3. Functionally, catalyzes the hydrolysis of N-succinyl-L,L-diaminopimelic acid (SDAP), forming succinate and LL-2,6-diaminopimelate (DAP), an intermediate involved in the bacterial biosynthesis of lysine and meso-diaminopimelic acid, an essential component of bacterial cell walls. The chain is Succinyl-diaminopimelate desuccinylase from Xanthomonas euvesicatoria pv. vesicatoria (strain 85-10) (Xanthomonas campestris pv. vesicatoria).